Consider the following 211-residue polypeptide: MGGKLIVFEGVEGCGKTSQMQLCSQWLESLGVSVVVTREPGGTELGLHLRRLLLEKAEDKPVAEVTELLLYAADRSQHVEQELKPNLAAGKYILCDRYTDSTIAYQGYGRGLNMSLINQLNYIATAGLESDLTIWLDIDVEVGLTRKRGDGIALDRIEQETIAFHRRVQQGYAELAASYPSRIVRVDGSLSKEAVQQVIQEILRVHLKGLP.

Position 10-17 (10-17) interacts with ATP; it reads GVEGCGKT.

The protein belongs to the thymidylate kinase family.

The enzyme catalyses dTMP + ATP = dTDP + ADP. Its function is as follows. Phosphorylation of dTMP to form dTDP in both de novo and salvage pathways of dTTP synthesis. In Nostoc punctiforme (strain ATCC 29133 / PCC 73102), this protein is Thymidylate kinase.